We begin with the raw amino-acid sequence, 193 residues long: CRIB domain-containing protein RIC5 (193 aa).

The CRIB domain occupies 29 to 42; that stretch reads IGIPTDVKHVAHIG. The disordered stretch occupies residues 42–193; it reads GWEGPSATTP…CAGLGSSTGR (152 aa). Positions 55–67 are enriched in basic and acidic residues; sequence HDFKPTDQTKTET. Residues 90 to 100 are compositionally biased toward polar residues; the sequence is STGNNSPTESP. The span at 123–134 shows a compositional bias: low complexity; sequence GSGSESGSGLEL.

In terms of assembly, interacts with ARAC11/ROP1. As to expression, expressed in flowers and pollen.

It localises to the cell membrane. Functionally, functions as a downstream effector of Rho-related GTP binding proteins of the 'Rho of Plants' (ROPs) family. Participates in the propagation of ROP GTPase signals in specific cellular responses. Is involved in pollen tube growth regulation through its interaction with ARAC11/ROP1. This Arabidopsis thaliana (Mouse-ear cress) protein is CRIB domain-containing protein RIC5 (RIC5).